We begin with the raw amino-acid sequence, 92 residues long: Putative pterin-4-alpha-carbinolamine dehydratase 2 (92 aa).

Belongs to the pterin-4-alpha-carbinolamine dehydratase family.

It catalyses the reaction (4aS,6R)-4a-hydroxy-L-erythro-5,6,7,8-tetrahydrobiopterin = (6R)-L-erythro-6,7-dihydrobiopterin + H2O. The chain is Putative pterin-4-alpha-carbinolamine dehydratase 2 from Gloeobacter violaceus (strain ATCC 29082 / PCC 7421).